Reading from the N-terminus, the 322-residue chain is Acetyl-coenzyme A carboxylase carboxyl transferase subunit beta (322 aa).

A CoA carboxyltransferase N-terminal domain is found at 24–293 (LWIKCPDTGQ…PAVEEPAVVD (270 aa)).

The protein belongs to the AccD/PCCB family. In terms of assembly, acetyl-CoA carboxylase is a heterohexamer composed of biotin carboxyl carrier protein (AccB), biotin carboxylase (AccC) and two subunits each of ACCase subunit alpha (AccA) and ACCase subunit beta (AccD).

It is found in the cytoplasm. It catalyses the reaction N(6)-carboxybiotinyl-L-lysyl-[protein] + acetyl-CoA = N(6)-biotinyl-L-lysyl-[protein] + malonyl-CoA. The protein operates within lipid metabolism; malonyl-CoA biosynthesis; malonyl-CoA from acetyl-CoA: step 1/1. Functionally, component of the acetyl coenzyme A carboxylase (ACC) complex. Biotin carboxylase (BC) catalyzes the carboxylation of biotin on its carrier protein (BCCP) and then the CO(2) group is transferred by the transcarboxylase to acetyl-CoA to form malonyl-CoA. This is Acetyl-coenzyme A carboxylase carboxyl transferase subunit beta from Rhodopseudomonas palustris (strain HaA2).